The primary structure comprises 1267 residues: Clustered mitochondria protein homolog (1267 aa).

7 TPR repeats span residues 64 to 102 (YNLK…KPYN), 420 to 453 (YSFV…LNML), 716 to 749 (EAHE…MIKE), 795 to 830 (LVPL…IPAL), 904 to 939 (RSIC…KSRA), 1010 to 1043 (AEKY…YERV), and 1138 to 1171 (AYIK…FTKE). Residues 329–586 (PTNGPDYLRT…NTYPLDVEFA (258 aa)) form the Clu domain. Residues 1203 to 1219 (QQDQTAASGLKQQPQKS) show a composition bias toward polar residues. Residues 1203-1267 (QQDQTAASGL…KSKSKGKNKK (65 aa)) are disordered. A compositionally biased stretch (basic and acidic residues) spans 1224 to 1239 (NKKETTNPDLADKSVD). The span at 1254 to 1267 (KTTKKSKSKGKNKK) shows a compositional bias: basic residues.

It belongs to the CLU family. As to quaternary structure, may associate with the eukaryotic translation initiation factor 3 (eIF-3) complex.

The protein localises to the cytoplasm. In terms of biological role, mRNA-binding protein involved in proper cytoplasmic distribution of mitochondria. The polypeptide is Clustered mitochondria protein homolog (Candida glabrata (strain ATCC 2001 / BCRC 20586 / JCM 3761 / NBRC 0622 / NRRL Y-65 / CBS 138) (Yeast)).